Reading from the N-terminus, the 32-residue chain is Ranatuerin-2CSa (32 aa).

C27 and C32 are disulfide-bonded.

As to expression, expressed by the skin glands.

It is found in the secreted. It localises to the target cell membrane. Functionally, antibacterial peptide with amphipathic alpha-helical structure. Active against E.coli ATCC 25726 (MIC=4-5 uM) and S.aureus ATCC 25923 (MIC=8-10 uM). Has a weak hemolytic activity on human erythrocytes (LC(50)=150-160 uM). The protein is Ranatuerin-2CSa of Rana cascadae (Cascades frog).